Reading from the N-terminus, the 367-residue chain is UDP-N-acetylglucosamine--N-acetylmuramyl-(pentapeptide) pyrophosphoryl-undecaprenol N-acetylglucosamine transferase (367 aa).

UDP-N-acetyl-alpha-D-glucosamine contacts are provided by residues 11–13 (TAG), Asn-125, Arg-163, Ser-197, and Gln-289.

The protein belongs to the glycosyltransferase 28 family. MurG subfamily.

Its subcellular location is the cell membrane. It catalyses the reaction di-trans,octa-cis-undecaprenyl diphospho-N-acetyl-alpha-D-muramoyl-L-alanyl-D-glutamyl-meso-2,6-diaminopimeloyl-D-alanyl-D-alanine + UDP-N-acetyl-alpha-D-glucosamine = di-trans,octa-cis-undecaprenyl diphospho-[N-acetyl-alpha-D-glucosaminyl-(1-&gt;4)]-N-acetyl-alpha-D-muramoyl-L-alanyl-D-glutamyl-meso-2,6-diaminopimeloyl-D-alanyl-D-alanine + UDP + H(+). The protein operates within cell wall biogenesis; peptidoglycan biosynthesis. In terms of biological role, cell wall formation. Catalyzes the transfer of a GlcNAc subunit on undecaprenyl-pyrophosphoryl-MurNAc-pentapeptide (lipid intermediate I) to form undecaprenyl-pyrophosphoryl-MurNAc-(pentapeptide)GlcNAc (lipid intermediate II). The protein is UDP-N-acetylglucosamine--N-acetylmuramyl-(pentapeptide) pyrophosphoryl-undecaprenol N-acetylglucosamine transferase of Clavibacter sepedonicus (Clavibacter michiganensis subsp. sepedonicus).